Reading from the N-terminus, the 643-residue chain is Type VI secretion system spike protein VgrG1a (643 aa).

The protein belongs to the VgrG protein family. In terms of assembly, forms homotrimers. Part of the type VI secretion system (T6SS). Interacts with EagT6 and Tse6; these interactions are required for Tse6 loading onto VgrG1. Interacts with Hcp1.

It is found in the secreted. Functionally, part of the H1 type VI secretion system (H1-T6SS) specialized secretion system, which delivers several virulence factors in both prokaryotic and eukaryotic cells during infection. Forms the spike at the tip of the elongating tube formed by haemolysin co-regulated protein 1/Hcp1. Allows the delivery of the Tse6 toxin to target cells where it exerts its toxicity. This Pseudomonas aeruginosa (strain ATCC 15692 / DSM 22644 / CIP 104116 / JCM 14847 / LMG 12228 / 1C / PRS 101 / PAO1) protein is Type VI secretion system spike protein VgrG1a.